We begin with the raw amino-acid sequence, 155 residues long: Small ribosomal subunit protein bS6 (155 aa).

A compositionally biased stretch (basic and acidic residues) spans 115–137 (EADAAKAEADAARVEAEAKKAET). The interval 115 to 155 (EADAAKAEADAARVEAEAKKAETDETDETVDAETPENEEEN) is disordered. The segment covering 138–155 (DETDETVDAETPENEEEN) has biased composition (acidic residues).

This sequence belongs to the bacterial ribosomal protein bS6 family.

In terms of biological role, binds together with bS18 to 16S ribosomal RNA. The protein is Small ribosomal subunit protein bS6 of Desulforapulum autotrophicum (strain ATCC 43914 / DSM 3382 / VKM B-1955 / HRM2) (Desulfobacterium autotrophicum).